The chain runs to 72 residues: Light-harvesting polypeptide B-885 alpha-1 chain (72 aa).

Topologically, residues 1-16 (SAPAQWKLWLVMDPRT) are cytoplasmic. Residues 17–37 (VMIGTAAWLGVLALLIHFLLL) traverse the membrane as a helical segment. H33 serves as a coordination point for a bacteriochlorophyll. The Periplasmic segment spans residues 38 to 72 (GTERFNWIDTGLKEQKATAAAQAAITPAPVTAAAK).

Belongs to the antenna complex alpha subunit family. In terms of assembly, the core complex is formed by different alpha and beta chains, binding bacteriochlorophyll molecules, and arranged most probably in tetrameric structures disposed around the reaction center. The non-pigmented gamma chains may constitute additional components.

Its subcellular location is the cell inner membrane. Its function is as follows. Antenna complexes are light-harvesting systems, which transfer the excitation energy to the reaction centers. The polypeptide is Light-harvesting polypeptide B-885 alpha-1 chain (Rhodocyclus tenuis (Rhodospirillum tenue)).